The chain runs to 152 residues: Superoxide dismutase [Cu-Zn] (152 aa).

3 residues coordinate Cu cation: histidine 45, histidine 47, and histidine 62. An intrachain disulfide couples cysteine 56 to cysteine 145. Zn(2+) is bound by residues histidine 62, histidine 70, histidine 79, and aspartate 82. A Cu cation-binding site is contributed by histidine 119.

It belongs to the Cu-Zn superoxide dismutase family. Homodimer. It depends on Cu cation as a cofactor. Requires Zn(2+) as cofactor.

The protein localises to the cytoplasm. The enzyme catalyses 2 superoxide + 2 H(+) = H2O2 + O2. Destroys radicals which are normally produced within the cells and which are toxic to biological systems. The chain is Superoxide dismutase [Cu-Zn] (SODCC) from Spinacia oleracea (Spinach).